The sequence spans 373 residues: MSQNYYQILGVSKTASQADLKKAYLKLAKQYHPDTTDAKDAEKKFKEINAAYDVLKDEQKRAAYDRLGHDAFQNQQSRGGGGNHGGFHPDINDIFGDFFSDFMGGSRRSSRPTSAKVRGSDLKYNLTINLEEAFHGIEKNISFSSAVKCDTCHGSGSEKGETVTTCDACSGVGATRMQQGFFTIEQACHKCQGNGHIIKNPCKKCHGMGRYHKQRNLSVNIPAGVENGTRIRHTGEGEAGIRGGNSGDLYVDITIKPHDIYKVDGANLHCKLPISFVNAALGGEIEVPVIEGGKVNLTIPAGTQNGDQLRLRSKGMSKMRSTIRGDMLTHIHVEVPKNLSKRQRELLEEFKKESINEKENDGSFFNKMKSLWS.

Positions 4–68 (NYYQILGVSK…QKRAAYDRLG (65 aa)) constitute a J domain. The CR-type zinc finger occupies 136-214 (GIEKNISFSS…CHGMGRYHKQ (79 aa)). Residues Cys-149, Cys-152, Cys-166, Cys-169, Cys-188, Cys-191, Cys-202, and Cys-205 each coordinate Zn(2+). CXXCXGXG motif repeat units lie at residues 149 to 156 (CDTCHGSG), 166 to 173 (CDACSGVG), 188 to 195 (CHKCQGNG), and 202 to 209 (CKKCHGMG).

It belongs to the DnaJ family. Homodimer. Requires Zn(2+) as cofactor.

The protein localises to the cytoplasm. Participates actively in the response to hyperosmotic and heat shock by preventing the aggregation of stress-denatured proteins and by disaggregating proteins, also in an autonomous, DnaK-independent fashion. Unfolded proteins bind initially to DnaJ; upon interaction with the DnaJ-bound protein, DnaK hydrolyzes its bound ATP, resulting in the formation of a stable complex. GrpE releases ADP from DnaK; ATP binding to DnaK triggers the release of the substrate protein, thus completing the reaction cycle. Several rounds of ATP-dependent interactions between DnaJ, DnaK and GrpE are required for fully efficient folding. Also involved, together with DnaK and GrpE, in the DNA replication of plasmids through activation of initiation proteins. This chain is Chaperone protein DnaJ, found in Rickettsia africae (strain ESF-5).